A 396-amino-acid polypeptide reads, in one-letter code: Mitogen-activated protein kinase mpkC (396 aa).

Residues 20–299 (YSDLQPVGLG…AAKALEHPYL (280 aa)) enclose the Protein kinase domain. ATP-binding positions include 26-34 (VGLGAFGLV) and K49. The active-site Proton acceptor is the D141. At T171 the chain carries Phosphothreonine. The TXY motif lies at 171–173 (TGY). Residue Y173 is modified to Phosphotyrosine.

The protein belongs to the protein kinase superfamily. Ser/Thr protein kinase family. MAP kinase subfamily. HOG1 sub-subfamily. Requires Mg(2+) as cofactor. Dually phosphorylated on Thr-171 and Tyr-173, which activates the enzyme.

The enzyme catalyses L-seryl-[protein] + ATP = O-phospho-L-seryl-[protein] + ADP + H(+). The catalysed reaction is L-threonyl-[protein] + ATP = O-phospho-L-threonyl-[protein] + ADP + H(+). With respect to regulation, activated by tyrosine and threonine phosphorylation. Functionally, mitogen-activated protein kinase required for growth on media where sorbitol or mannitol is the sole carbon source. The sequence is that of Mitogen-activated protein kinase mpkC (mpkC) from Aspergillus niger (strain ATCC MYA-4892 / CBS 513.88 / FGSC A1513).